The primary structure comprises 179 residues: Inner membrane-spanning protein YciB (179 aa).

The next 6 membrane-spanning stretches (helical) occupy residues Phe3–Tyr23, Thr24–His44, Pro49–His69, Trp76–Trp96, Leu121–Phe141, and Phe149–Leu169.

This sequence belongs to the YciB family.

The protein localises to the cell inner membrane. Its function is as follows. Plays a role in cell envelope biogenesis, maintenance of cell envelope integrity and membrane homeostasis. In Cupriavidus taiwanensis (strain DSM 17343 / BCRC 17206 / CCUG 44338 / CIP 107171 / LMG 19424 / R1) (Ralstonia taiwanensis (strain LMG 19424)), this protein is Inner membrane-spanning protein YciB.